We begin with the raw amino-acid sequence, 307 residues long: Ornithine carbamoyltransferase (307 aa).

Carbamoyl phosphate is bound by residues 56–59 (STRT), Q83, R107, and 134–137 (HPCQ). L-ornithine contacts are provided by residues N165, D223, and 227 to 228 (SM). Residues 263-264 (CL) and R291 contribute to the carbamoyl phosphate site.

This sequence belongs to the aspartate/ornithine carbamoyltransferase superfamily. OTCase family.

The protein localises to the cytoplasm. It carries out the reaction carbamoyl phosphate + L-ornithine = L-citrulline + phosphate + H(+). Its pathway is amino-acid biosynthesis; L-arginine biosynthesis; L-arginine from L-ornithine and carbamoyl phosphate: step 1/3. Functionally, reversibly catalyzes the transfer of the carbamoyl group from carbamoyl phosphate (CP) to the N(epsilon) atom of ornithine (ORN) to produce L-citrulline. In Cupriavidus pinatubonensis (strain JMP 134 / LMG 1197) (Cupriavidus necator (strain JMP 134)), this protein is Ornithine carbamoyltransferase.